A 752-amino-acid chain; its full sequence is Probable beta-glucosidase D (752 aa).

The signal sequence occupies residues 1-18; it reads MRFVSLAVGAALLGAAGA. 2 N-linked (GlcNAc...) asparagine glycosylation sites follow: Asn187 and Asn237. Asp265 is a catalytic residue. N-linked (GlcNAc...) asparagine glycans are attached at residues Asn299, Asn343, Asn441, Asn510, Asn532, Asn571, Asn586, Asn638, Asn661, and Asn743.

Belongs to the glycosyl hydrolase 3 family.

The protein localises to the secreted. The enzyme catalyses Hydrolysis of terminal, non-reducing beta-D-glucosyl residues with release of beta-D-glucose.. The protein operates within glycan metabolism; cellulose degradation. In terms of biological role, beta-glucosidases are one of a number of cellulolytic enzymes involved in the degradation of cellulosic biomass. Catalyzes the last step releasing glucose from the inhibitory cellobiose. In Aspergillus oryzae (strain ATCC 42149 / RIB 40) (Yellow koji mold), this protein is Probable beta-glucosidase D (bglD).